The sequence spans 215 residues: Chloramphenicol acetyltransferase (215 aa).

Catalysis depends on His189, which acts as the Proton acceptor.

It belongs to the chloramphenicol acetyltransferase family. Homotrimer.

The enzyme catalyses chloramphenicol + acetyl-CoA = chloramphenicol 3-acetate + CoA. Its function is as follows. This enzyme is an effector of chloramphenicol resistance in bacteria. The protein is Chloramphenicol acetyltransferase (cat) of Staphylococcus aureus.